The following is a 349-amino-acid chain: MGTSLLGGVPVAENVPLAPLTTLRVGPVARRLVTCVTTDQIVDAVMAAGPEALILAGGSNVVLAGDAADLTVVRLANTRISVDGDVVRAEAGAGWDDVVAASLAHGLGGLECLSGIPGSAGATPVQNVGAYGAEVADTIRRVRLLERGTGSVRWVSPEFLRFGYRTSVLKHSSQWVVLEVEFGLDAAGHSAPVRYRELATELAVEQGERTDPQRVRAAVLELRARKGMVLDAADHDTWSVGSFFTNPVVSRAEFERIAATVGSAVPNYPAEDGVKLAAGWLVEQAGFGKGYPGADAPARLSTKHALALTNRGTATTADVLALARTVRDGVKAAFGIELTPEPVLVGCSL.

An FAD-binding PCMH-type domain is found at V25 to Q213. R165 is a catalytic residue. The Proton donor role is filled by S242. The active site involves E341.

This sequence belongs to the MurB family. FAD serves as cofactor.

It localises to the cytoplasm. The catalysed reaction is UDP-N-acetyl-alpha-D-muramate + NADP(+) = UDP-N-acetyl-3-O-(1-carboxyvinyl)-alpha-D-glucosamine + NADPH + H(+). The protein operates within cell wall biogenesis; peptidoglycan biosynthesis. Cell wall formation. The protein is UDP-N-acetylenolpyruvoylglucosamine reductase of Mycolicibacterium gilvum (strain PYR-GCK) (Mycobacterium gilvum (strain PYR-GCK)).